The sequence spans 507 residues: UDP-N-acetylhexosamine pyrophosphorylase-like protein 1 (507 aa).

A disordered region spans residues 56–91 (ACARPHGPPPDLAARLRPLPPERVGRASRSDPETRR). A compositionally biased stretch (basic and acidic residues) spans 78–91 (RVGRASRSDPETRR). The Substrate binding signature appears at 111 to 114 (LAGG). UTP is bound by residues 111–114 (LAGG), K125, Q199, and G225. Residue N226 participates in substrate binding. Residue D256 participates in UTP binding. The Substrate binding signature appears at 306-307 (EY). K380 provides a ligand contact to UTP. Residue K410 coordinates substrate.

This sequence belongs to the UDPGP type 1 family.

This chain is UDP-N-acetylhexosamine pyrophosphorylase-like protein 1 (UAP1L1), found in Homo sapiens (Human).